The chain runs to 147 residues: Transcriptional regulator MraZ (147 aa).

SpoVT-AbrB domains follow at residues asparagine 6–glutamate 48 and threonine 77–lysine 120.

Belongs to the MraZ family. As to quaternary structure, forms oligomers.

Its subcellular location is the cytoplasm. It localises to the nucleoid. This chain is Transcriptional regulator MraZ, found in Mycoplasmopsis pulmonis (strain UAB CTIP) (Mycoplasma pulmonis).